The sequence spans 294 residues: MAVTASMVKELREATGAGMMDCKKALAETDGNMEEAIEFLRKKGMAGADKKAGRTAAEGVIAIAVSDDKKKAAIVEVNCETDFVAKGDDFKAFADEIAAIVLATGTVDVDALMNEKMANGQTIDEKRREMIGKIGENMAVRRVELVESNGTIGKYQHGEKIGVVVAMNGGDDALVRDVAMHVAAANPSAISADDVDQEMLEKERKFQIEQAQDSGKPAEIIEKMIDGRMRKYLQEITLLGQAFVKDPDQTVEKLLKASDASVSNFVRLEVGEGIEIEETNFADEVAAAAAAVKG.

Residues 81–84 are involved in Mg(2+) ion dislocation from EF-Tu; that stretch reads TDFV.

Belongs to the EF-Ts family.

The protein resides in the cytoplasm. Its function is as follows. Associates with the EF-Tu.GDP complex and induces the exchange of GDP to GTP. It remains bound to the aminoacyl-tRNA.EF-Tu.GTP complex up to the GTP hydrolysis stage on the ribosome. The polypeptide is Elongation factor Ts (Hydrogenovibrio crunogenus (strain DSM 25203 / XCL-2) (Thiomicrospira crunogena)).